Reading from the N-terminus, the 513-residue chain is Calcium-dependent protein kinase 2 (513 aa).

The Protein kinase domain maps to 65–323; it reads YSFGKELGRG…SAQVLQHQWL (259 aa). ATP is bound by residues 71 to 79 and Lys-94; that span reads LGRGQFGVT. Residue Asp-189 is the Proton acceptor of the active site. The interval 329–359 is autoinhibitory domain; sequence ASDKPIDSAVLSRMKQFRAMNKLKKMALKVI. 4 consecutive EF-hand domains span residues 366-401, 402-437, 438-473, and 478-508; these read EEIKGLKQMFMNMDTDNSGTITYEELKAGLAKLGSK, LSEAEVKQLMEAADVDGNGSIDYVEFITATMHRHKL, ERDEHLFKAFQYFDKDNSGFITRDELESALIEHEMG, and IREIISEVDTDNDGRINYEEFCAMMRGGMQQ. Asp-379, Asp-381, Ser-383, Thr-385, Glu-390, Asp-415, Asp-417, Asn-419, Ser-421, Glu-426, Asp-451, Asp-453, Ser-455, Glu-462, Asp-486, Asp-488, Asp-490, Arg-492, and Glu-497 together coordinate Ca(2+).

The protein belongs to the protein kinase superfamily. Ser/Thr protein kinase family. CDPK subfamily.

It carries out the reaction L-seryl-[protein] + ATP = O-phospho-L-seryl-[protein] + ADP + H(+). The catalysed reaction is L-threonyl-[protein] + ATP = O-phospho-L-threonyl-[protein] + ADP + H(+). Activated by calcium. Autophosphorylation may play an important role in the regulation of the kinase activity. Functionally, may play a role in signal transduction pathways that involve calcium as a second messenger. The protein is Calcium-dependent protein kinase 2 (CPK2) of Zea mays (Maize).